A 100-amino-acid chain; its full sequence is MDFTTNEVLFSRLVVCKNLTRKNFPFLQLKGSSILRFEWSEEMYRLYIWLLPYRKDYNEKFKGILINPSIFLLGCHHVQICSFPNNLVFFMGKCDLFRFC.

This is an uncharacterized protein from Schizosaccharomyces pombe (strain 972 / ATCC 24843) (Fission yeast).